The following is a 122-amino-acid chain: Large ribosomal subunit protein uL14 (122 aa).

This sequence belongs to the universal ribosomal protein uL14 family. As to quaternary structure, part of the 50S ribosomal subunit. Forms a cluster with proteins L3 and L19. In the 70S ribosome, L14 and L19 interact and together make contacts with the 16S rRNA in bridges B5 and B8.

Functionally, binds to 23S rRNA. Forms part of two intersubunit bridges in the 70S ribosome. The sequence is that of Large ribosomal subunit protein uL14 from Methylorubrum populi (strain ATCC BAA-705 / NCIMB 13946 / BJ001) (Methylobacterium populi).